The following is a 294-amino-acid chain: Tetraspanin-15 (294 aa).

Over 1 to 23 (MPRGDSEQVRYCARFSYLWLKFS) the chain is Cytoplasmic. Residues 24 to 44 (LIIYSTVFWLIGGLVLSVGIY) form a helical membrane-spanning segment. Residues 45–62 (AEAERQKYKTLESAFLAP) lie on the Extracellular side of the membrane. Residues 63–83 (AIILILLGVVMFIVSFIGVLA) form a helical membrane-spanning segment. The Cytoplasmic portion of the chain corresponds to 84-94 (SLRDNLCLLQS). A helical transmembrane segment spans residues 95 to 115 (FMYILGICLVMELIGGIVALI). The Extracellular portion of the chain corresponds to 116-235 (FRNQTIDFLN…WFMDNYTIMA (120 aa)). Asparagine 118 is a glycosylation site (N-linked (GlcNAc...) asparagine). 4 disulfides stabilise this stretch: cysteine 154/cysteine 219, cysteine 155/cysteine 185, cysteine 171/cysteine 179, and cysteine 186/cysteine 198. N-linked (GlcNAc...) asparagine glycosylation is found at asparagine 189 and asparagine 230. Residues 236 to 256 (GLLLGILLPQFLGVLLTLLYI) traverse the membrane as a helical segment. The Cytoplasmic segment spans residues 257 to 294 (TRVEDIILEHSVTDGLLGPGAKSRTDTAGTGCCLCYPD).

The protein belongs to the tetraspanin (TM4SF) family. In terms of assembly, interacts with ADAM10; the interaction influences ADAM10 substrate specificity, endocytosis and turnover. In terms of processing, palmitoylated.

The protein localises to the cell membrane. Its subcellular location is the late endosome membrane. Functionally, part of TspanC8 subgroup, composed of 6 members that interact with the transmembrane metalloprotease ADAM10. This interaction is required for ADAM10 exit from the endoplasmic reticulum and for enzymatic maturation and trafficking to the cell surface as well as substrate specificity. Different TspanC8/ADAM10 complexes have distinct substrates. Promotes ADAM10-mediated cleavage of CDH2. Negatively regulates ligand-induced Notch activity probably by regulating ADAM10 activity. In Mus musculus (Mouse), this protein is Tetraspanin-15 (Tspan15).